Here is a 404-residue protein sequence, read N- to C-terminus: Probable RNA polymerase sigma-C factor (404 aa).

The Polymerase core binding motif lies at 193 to 206 (DLIQEGTLGLERAV). Positions 362-381 (LSEIGRILNLSRERVRQIEA) form a DNA-binding region, H-T-H motif.

This sequence belongs to the sigma-70 factor family.

Its function is as follows. Sigma factors are initiation factors that promote the attachment of RNA polymerase to specific initiation sites and are then released. This Synechocystis sp. (strain ATCC 27184 / PCC 6803 / Kazusa) protein is Probable RNA polymerase sigma-C factor (sigC).